Here is a 350-residue protein sequence, read N- to C-terminus: Isopentenyl-diphosphate delta-isomerase (350 aa).

15 to 16 (RK) lines the substrate pocket. FMN contacts are provided by residues Ser73, 74-76 (SMT), Ser104, and Asn132. 104 to 106 (SQR) is a binding site for substrate. Substrate is bound at residue Gln167. Glu168 provides a ligand contact to Mg(2+). FMN is bound by residues Lys199, Thr229, 279–281 (GLR), and 300–301 (AM).

The protein belongs to the IPP isomerase type 2 family. Homooctamer. Dimer of tetramers. Requires FMN as cofactor. The cofactor is NADPH. It depends on Mg(2+) as a cofactor.

The protein localises to the cytoplasm. The enzyme catalyses isopentenyl diphosphate = dimethylallyl diphosphate. In terms of biological role, involved in the biosynthesis of isoprenoids. Catalyzes the 1,3-allylic rearrangement of the homoallylic substrate isopentenyl (IPP) to its allylic isomer, dimethylallyl diphosphate (DMAPP). The chain is Isopentenyl-diphosphate delta-isomerase from Nostoc sp. (strain PCC 7120 / SAG 25.82 / UTEX 2576).